Consider the following 205-residue polypeptide: MDIMKDKIRQALSELDILATEVQIDQWLDYLKLLEKWNKVYNMTAIKNIDEMLVKHLFDSLAVAKYIKGDSTVDVGTGGGLPGVVLAILYPQHQFTLVDSVGKKIMFLKNVKKSLSLNNINPLNTRIENLEGNFDNIISRAFSSVDTFYELCKHFLTEHNQMLAMKGRDLEERNLESLPLNIEKYSIKVPFLNAERNLIVMRKKL.

S-adenosyl-L-methionine contacts are provided by residues Gly76, Leu81, Ile127 to Glu128, and Arg140.

This sequence belongs to the methyltransferase superfamily. RNA methyltransferase RsmG family.

Its subcellular location is the cytoplasm. It carries out the reaction guanosine(527) in 16S rRNA + S-adenosyl-L-methionine = N(7)-methylguanosine(527) in 16S rRNA + S-adenosyl-L-homocysteine. Its function is as follows. Specifically methylates the N7 position of guanine in position 527 of 16S rRNA. This Francisella tularensis subsp. holarctica (strain FTNF002-00 / FTA) protein is Ribosomal RNA small subunit methyltransferase G.